The sequence spans 261 residues: Yop proteins translocation protein T (261 aa).

7 helical membrane passes run 20–40, 44–64, 77–97, 131–151, 180–200, 214–234, and 239–259; these read FMAC…GVLL, IVCS…YIEV, IILG…LESA, TLIT…ALFH, ILLI…LAEF, VFVL…VIYC, and SHAS…IPVL.

This sequence belongs to the FliR/MopE/SpaR family.

The protein localises to the cell membrane. In terms of biological role, component of the yop secretion machinery. This chain is Yop proteins translocation protein T (yscT), found in Yersinia pestis.